The following is a 52-amino-acid chain: Large ribosomal subunit protein bL33 (52 aa).

This sequence belongs to the bacterial ribosomal protein bL33 family.

The sequence is that of Large ribosomal subunit protein bL33 from Campylobacter jejuni subsp. jejuni serotype O:6 (strain 81116 / NCTC 11828).